Consider the following 651-residue polypeptide: Gag-Pro polyprotein (651 aa).

Gly-2 is lipidated: N-myristoyl glycine; by host. A disordered region spans residues 93–144; it reads QIPSRPAPPPPSSPTHDPPDSDPQIPPPYVEPTAPQVLPVMHPHGAPPNHRP. Ser-105 carries the post-translational modification Phosphoserine; by host MAPK1. The PPXY motif motif lies at 118 to 121; the sequence is PPPY. Residues 124–127 carry the PTAP/PSAP motif motif; the sequence is PTAP. CCHC-type zinc fingers lie at residues 355–372 and 378–395; these read QPCF…DCTQ and GPCP…DCPR. The Peptidase A2 domain occupies 476 to 554; sequence IEALLDTGAD…NNWAIIGRDA (79 aa). The active-site For protease activity; shared with dimeric partner is Asp-481.

As to quaternary structure, homodimer; the homodimers are part of the immature particles. Interacts with human TSG101 and NEDD4; these interactions are essential for budding and release of viral particles. In terms of assembly, homodimer; further assembles as homohexamers. In terms of processing, specific enzymatic cleavages by the viral protease yield mature proteins. The polyprotein is cleaved during and after budding, this process is termed maturation. The protease is autoproteolytically processed at its N- and C-termini. Phosphorylation of the matrix protein p19 by MAPK1 seems to play a role in budding. Post-translationally, myristoylated. Myristoylation of the matrix (MA) domain mediates the transport and binding of Gag polyproteins to the host plasma membrane and is required for the assembly of viral particles.

The protein localises to the virion. Its function is as follows. The matrix domain targets Gag, Gag-Pro and Gag-Pro-Pol polyproteins to the plasma membrane via a multipartite membrane binding signal, that includes its myristoylated N-terminus. Matrix protein. Functionally, forms the spherical core of the virus that encapsulates the genomic RNA-nucleocapsid complex. In terms of biological role, binds strongly to viral nucleic acids and promote their aggregation. Also destabilizes the nucleic acids duplexes via highly structured zinc-binding motifs. Its function is as follows. The aspartyl protease mediates proteolytic cleavages of Gag and Gag-Pol polyproteins during or shortly after the release of the virion from the plasma membrane. Cleavages take place as an ordered, step-wise cascade to yield mature proteins. This process is called maturation. Displays maximal activity during the budding process just prior to particle release from the cell. Cleaves the translation initiation factor eIF4G leading to the inhibition of host cap-dependent translation. The sequence is that of Gag-Pro polyprotein (gag-pro) from Human T-cell leukemia virus 1 (strain Japan ATK-1 subtype A) (HTLV-1).